The chain runs to 211 residues: Ribosomal RNA small subunit methyltransferase G (211 aa).

S-adenosyl-L-methionine-binding positions include Gly-75, Leu-80, Val-130–Glu-131, and Arg-145.

Belongs to the methyltransferase superfamily. RNA methyltransferase RsmG family.

The protein resides in the cytoplasm. It catalyses the reaction guanosine(527) in 16S rRNA + S-adenosyl-L-methionine = N(7)-methylguanosine(527) in 16S rRNA + S-adenosyl-L-homocysteine. Functionally, specifically methylates the N7 position of guanine in position 527 of 16S rRNA. In Aromatoleum aromaticum (strain DSM 19018 / LMG 30748 / EbN1) (Azoarcus sp. (strain EbN1)), this protein is Ribosomal RNA small subunit methyltransferase G.